The primary structure comprises 768 residues: Phosphoribosylformylglycinamidine synthase subunit PurL (768 aa).

H48 is a catalytic residue. 2 residues coordinate ATP: Y51 and K90. E92 contacts Mg(2+). Residues 93–96 (SHNH) and R115 each bind substrate. The active-site Proton acceptor is the H94. Mg(2+) is bound at residue D116. Residue Q239 coordinates substrate. D267 contacts Mg(2+). 311–313 (ESQ) provides a ligand contact to substrate. ATP is bound by residues D507 and G544. N545 is a Mg(2+) binding site. A substrate-binding site is contributed by S547.

This sequence belongs to the FGAMS family. Monomer. Part of the FGAM synthase complex composed of 1 PurL, 1 PurQ and 2 PurS subunits.

Its subcellular location is the cytoplasm. The catalysed reaction is N(2)-formyl-N(1)-(5-phospho-beta-D-ribosyl)glycinamide + L-glutamine + ATP + H2O = 2-formamido-N(1)-(5-O-phospho-beta-D-ribosyl)acetamidine + L-glutamate + ADP + phosphate + H(+). The protein operates within purine metabolism; IMP biosynthesis via de novo pathway; 5-amino-1-(5-phospho-D-ribosyl)imidazole from N(2)-formyl-N(1)-(5-phospho-D-ribosyl)glycinamide: step 1/2. Part of the phosphoribosylformylglycinamidine synthase complex involved in the purines biosynthetic pathway. Catalyzes the ATP-dependent conversion of formylglycinamide ribonucleotide (FGAR) and glutamine to yield formylglycinamidine ribonucleotide (FGAM) and glutamate. The FGAM synthase complex is composed of three subunits. PurQ produces an ammonia molecule by converting glutamine to glutamate. PurL transfers the ammonia molecule to FGAR to form FGAM in an ATP-dependent manner. PurS interacts with PurQ and PurL and is thought to assist in the transfer of the ammonia molecule from PurQ to PurL. The chain is Phosphoribosylformylglycinamidine synthase subunit PurL from Parasynechococcus marenigrum (strain WH8102).